Consider the following 262-residue polypeptide: Ribosome-recycling factor, mitochondrial (262 aa).

The transit peptide at 1–55 directs the protein to the mitochondrion; that stretch reads MASGIRCFRLLHPAFRSYHAALTRPVSEVSMKTVSGRQHGHRQYSAYPAVPVRHF.

Belongs to the RRF family.

The protein localises to the mitochondrion. Responsible for the disassembly of ribosomes from messenger RNA at the termination of mitochondrial protein biosynthesis. Acts in collaboration with GFM2. Promotes mitochondrial ribosome recycling by dissolution of intersubunit contacts. The protein is Ribosome-recycling factor, mitochondrial (Mrrf) of Mus musculus (Mouse).